The sequence spans 86 residues: Large ribosomal subunit protein bL31B (86 aa).

The protein belongs to the bacterial ribosomal protein bL31 family. Type B subfamily. As to quaternary structure, part of the 50S ribosomal subunit.

This is Large ribosomal subunit protein bL31B from Streptococcus uberis (strain ATCC BAA-854 / 0140J).